The sequence spans 172 residues: MKKLFLKLMKRNLSEDKIRKLGVQVGNDCRFLSVDRSTFGSEPYLIQIGNHVTITSGVKFATHDGGVWIFRKKYPEIDNFHRIFIGNNVFIGINSIILPGVTIGNNVVVGAGSVVTKDVPDNVIIGGNPAKKIKSIEAYETKILENADYTKKLNYNEKKIYLLNKFKENRYN.

It belongs to the transferase hexapeptide repeat family.

It participates in capsule biogenesis; capsule polysaccharide biosynthesis. Functionally, required for the biosynthesis of type 1 capsular polysaccharide. The protein is Protein CapG (capG) of Staphylococcus aureus.